The following is a 162-amino-acid chain: uncharacterized protein (162 aa).

This is an uncharacterized protein from Homo sapiens (Human).